The primary structure comprises 277 residues: Antigen 1 (277 aa).

A signal peptide spans 1–16 (MQLLALTLALCASIAA). N-linked (GlcNAc...) asparagine glycosylation is found at Asn-41, Asn-71, Asn-127, and Asn-200. Residues 230–277 (CVGGEEENDGQGEEQTEEPAQDDQQDEAAEEEIPENCHTHEGGELHCT) are disordered. The span at 233-263 (GEEENDGQGEEQTEEPAQDDQQDEAAEEEIP) shows a compositional bias: acidic residues. The segment covering 264 to 277 (ENCHTHEGGELHCT) has biased composition (basic and acidic residues).

It belongs to the ZPS1 family.

The sequence is that of Antigen 1 (aspnd1) from Emericella nidulans (strain FGSC A4 / ATCC 38163 / CBS 112.46 / NRRL 194 / M139) (Aspergillus nidulans).